The sequence spans 690 residues: Glycine--tRNA ligase 1, mitochondrial (690 aa).

The transit peptide at 1 to 24 (MSFFNISRRFYSQIVKKSVKIKRM) directs the protein to the mitochondrion. The residue at position 25 (Ser-25) is an N-acetylserine. Position 226 is a phosphoserine (Ser-226). Glu-251 provides a ligand contact to glycine. Residues 283–285 (RNE) and 294–295 (RV) contribute to the ATP site. Glu-302 is a glycine binding site. 410–411 (EC) serves as a coordination point for ATP. Ser-476 and Ser-528 each carry phosphoserine. 531–533 (EPS) is a glycine binding site. Arg-538 is an ATP binding site. Thr-689 is modified (phosphothreonine).

This sequence belongs to the class-II aminoacyl-tRNA synthetase family. As to quaternary structure, homodimer.

It is found in the cytoplasm. The protein localises to the mitochondrion matrix. The catalysed reaction is tRNA(Gly) + glycine + ATP = glycyl-tRNA(Gly) + AMP + diphosphate. It carries out the reaction 2 ATP + H(+) = P(1),P(4)-bis(5'-adenosyl) tetraphosphate + diphosphate. Catalyzes the ATP-dependent ligation of glycine to the 3'-end of its cognate tRNA, via the formation of an aminoacyl-adenylate intermediate (Gly-AMP). Also produces diadenosine tetraphosphate (Ap4A), a universal pleiotropic signaling molecule needed for cell regulation pathways, by direct condensation of 2 ATPs. Thereby, may play a special role in Ap4A homeostasis. This chain is Glycine--tRNA ligase 1, mitochondrial (GRS1), found in Saccharomyces cerevisiae (strain ATCC 204508 / S288c) (Baker's yeast).